The following is a 544-amino-acid chain: Chaperonin GroEL (544 aa).

Residues 30–33 (TLGP), lysine 51, 87–91 (DGTTT), glycine 415, and aspartate 495 each bind ATP.

This sequence belongs to the chaperonin (HSP60) family. Forms a cylinder of 14 subunits composed of two heptameric rings stacked back-to-back. Interacts with the co-chaperonin GroES.

The protein localises to the cytoplasm. The enzyme catalyses ATP + H2O + a folded polypeptide = ADP + phosphate + an unfolded polypeptide.. Together with its co-chaperonin GroES, plays an essential role in assisting protein folding. The GroEL-GroES system forms a nano-cage that allows encapsulation of the non-native substrate proteins and provides a physical environment optimized to promote and accelerate protein folding. This is Chaperonin GroEL from Methylobacillus flagellatus (strain ATCC 51484 / DSM 6875 / VKM B-1610 / KT).